The following is a 520-amino-acid chain: Translation initiation factor IF3-1, mitochondrial (520 aa).

The N-terminal 66 residues, 1–66 (MAIWRIINRS…SNIFQNLRFL (66 aa)), are a transit peptide targeting the mitochondrion. Over residues 271-282 (ARVKEESPKPDS) the composition is skewed to basic and acidic residues. Residues 271–520 (ARVKEESPKP…YGIFSTPKTK (250 aa)) are disordered. The segment covering 336-361 (EPQSPNQHVNPQRPRFSNQAPNQQPT) has biased composition (polar residues). Over residues 369–379 (PNQPPSAPRPQ) the composition is skewed to pro residues. Composition is skewed to polar residues over residues 404–422 (NQAPNQQSTGRFNPQFPNQ) and 458–468 (FQNQAPNQQPT). Residues 473–485 (PQPPNPPRAPPRP) show a composition bias toward pro residues.

This sequence belongs to the IF-3 family. As to quaternary structure, monomer.

Its subcellular location is the mitochondrion. Its function is as follows. IF-3 binds to the 30S ribosomal subunit and shifts the equilibrium between 70S ribosomes and their 50S and 30S subunits in favor of the free subunits, thus enhancing the availability of 30S subunits on which protein synthesis initiation begins. This is Translation initiation factor IF3-1, mitochondrial from Arabidopsis thaliana (Mouse-ear cress).